The sequence spans 434 residues: Chaperone SurA (434 aa).

Residues Met1–Ala22 form the signal peptide. PpiC domains follow at residues Thr173–Asp274 and Val283–Asp383.

It is found in the periplasm. It catalyses the reaction [protein]-peptidylproline (omega=180) = [protein]-peptidylproline (omega=0). Its function is as follows. Chaperone involved in the correct folding and assembly of outer membrane proteins. Recognizes specific patterns of aromatic residues and the orientation of their side chains, which are found more frequently in integral outer membrane proteins. May act in both early periplasmic and late outer membrane-associated steps of protein maturation. The chain is Chaperone SurA from Photobacterium profundum (strain SS9).